A 363-amino-acid chain; its full sequence is Isopentenyl-diphosphate delta-isomerase (363 aa).

15 to 16 contributes to the substrate binding site; the sequence is RK. FMN contacts are provided by residues S73, 74–76, S104, and N133; that span reads SMT. 104–106 contacts substrate; it reads SMR. Q168 contributes to the substrate binding site. Residue E169 participates in Mg(2+) binding. FMN-binding positions include K200, T230, and 313–314; that span reads AG.

It belongs to the IPP isomerase type 2 family. Homooctamer. Dimer of tetramers. FMN is required as a cofactor. It depends on NADPH as a cofactor. The cofactor is Mg(2+).

The protein resides in the cytoplasm. It catalyses the reaction isopentenyl diphosphate = dimethylallyl diphosphate. Involved in the biosynthesis of isoprenoids. Catalyzes the 1,3-allylic rearrangement of the homoallylic substrate isopentenyl (IPP) to its allylic isomer, dimethylallyl diphosphate (DMAPP). This chain is Isopentenyl-diphosphate delta-isomerase, found in Chlorobium phaeobacteroides (strain DSM 266 / SMG 266 / 2430).